A 786-amino-acid polypeptide reads, in one-letter code: E3 ubiquitin-protein ligase pub3 (786 aa).

A C2 domain is found at 1–109 (MEQGAKRVRF…RSNREVSLTR (109 aa)). Disordered regions lie at residues 134–225 (IRAP…NSNA) and 263–306 (TWTR…DSGN). Residues 142-193 (SSTTANRTTSTPTTTTARTTRTTPRPTATTNTSNQSTSNSTRNGTSAATSNG) show a composition bias toward low complexity. Residues 204-213 (HRSSPVTNRQ) show a composition bias toward polar residues. Over residues 214 to 225 (TNNTSALSNSNA) the composition is skewed to low complexity. Residues 236-269 (GRLPPGWERRADSLGRTYYVDHNTRTTTWTRPAS) form the WW 1 domain. Composition is skewed to polar residues over residues 263–285 (TWTRPASSTNPVHNTSSDSQRLN) and 295–305 (SNPSLMQSDSG). WW domains are found at residues 306–339 (NDLPFGWEMRYTDTGRPYFVDHNTRTTTWVDPRN) and 364–397 (GPLPSGWEMRLTNSARVYFVDHNTKTTTWDDPRL). One can recognise an HECT domain in the interval 453-786 (SAHDLKKRLM…VENTVGFGNE (334 aa)). The active-site Glycyl thioester intermediate is Cys-754.

It carries out the reaction S-ubiquitinyl-[E2 ubiquitin-conjugating enzyme]-L-cysteine + [acceptor protein]-L-lysine = [E2 ubiquitin-conjugating enzyme]-L-cysteine + N(6)-ubiquitinyl-[acceptor protein]-L-lysine.. It participates in protein modification; protein ubiquitination. Its function is as follows. E3 ubiquitin-protein ligase which accepts ubiquitin from an E2 ubiquitin-conjugating enzyme in the form of a thioester and then directly transfers the ubiquitin to targeted substrates. The chain is E3 ubiquitin-protein ligase pub3 (pub3) from Schizosaccharomyces pombe (strain 972 / ATCC 24843) (Fission yeast).